The following is a 353-amino-acid chain: Methylthioribose-1-phosphate isomerase (353 aa).

Substrate contacts are provided by residues 51–53 (RGA), Arg94, and Gln203. Asp244 acts as the Proton donor in catalysis. Substrate is bound at residue 254–255 (NK).

Belongs to the eIF-2B alpha/beta/delta subunits family. MtnA subfamily.

It catalyses the reaction 5-(methylsulfanyl)-alpha-D-ribose 1-phosphate = 5-(methylsulfanyl)-D-ribulose 1-phosphate. The protein operates within amino-acid biosynthesis; L-methionine biosynthesis via salvage pathway; L-methionine from S-methyl-5-thio-alpha-D-ribose 1-phosphate: step 1/6. In terms of biological role, catalyzes the interconversion of methylthioribose-1-phosphate (MTR-1-P) into methylthioribulose-1-phosphate (MTRu-1-P). The polypeptide is Methylthioribose-1-phosphate isomerase (Nostoc punctiforme (strain ATCC 29133 / PCC 73102)).